Reading from the N-terminus, the 519-residue chain is Golgi-associated kinase 1B (519 aa).

Over Met1 to Asn37 the chain is Cytoplasmic. Residues Leu38–Val55 form a helical; Signal-anchor for type II membrane protein membrane-spanning segment. Over Gly56 to Glu519 the chain is Extracellular. The segment at His62 to Gln103 is disordered. Positions Lys68–Ala77 are enriched in basic and acidic residues. A glycan (N-linked (GlcNAc...) asparagine) is linked at Asn289.

Belongs to the GASK family.

It localises to the golgi apparatus membrane. This is Golgi-associated kinase 1B from Homo sapiens (Human).